An 885-amino-acid polypeptide reads, in one-letter code: Alanine--tRNA ligase (885 aa).

Basic and acidic residues predominate over residues 426-444; it reads QEQKTRARQDRREKQRGGA. The segment at 426-445 is disordered; it reads QEQKTRARQDRREKQRGGAE. 4 residues coordinate Zn(2+): H568, H572, C671, and H675.

It belongs to the class-II aminoacyl-tRNA synthetase family. Requires Zn(2+) as cofactor.

It is found in the cytoplasm. It catalyses the reaction tRNA(Ala) + L-alanine + ATP = L-alanyl-tRNA(Ala) + AMP + diphosphate. In terms of biological role, catalyzes the attachment of alanine to tRNA(Ala) in a two-step reaction: alanine is first activated by ATP to form Ala-AMP and then transferred to the acceptor end of tRNA(Ala). Also edits incorrectly charged Ser-tRNA(Ala) and Gly-tRNA(Ala) via its editing domain. This Chlorobium phaeovibrioides (strain DSM 265 / 1930) (Prosthecochloris vibrioformis (strain DSM 265)) protein is Alanine--tRNA ligase.